The chain runs to 188 residues: Elongation factor P (188 aa).

Belongs to the elongation factor P family.

Its subcellular location is the cytoplasm. Its pathway is protein biosynthesis; polypeptide chain elongation. Functionally, involved in peptide bond synthesis. Stimulates efficient translation and peptide-bond synthesis on native or reconstituted 70S ribosomes in vitro. Probably functions indirectly by altering the affinity of the ribosome for aminoacyl-tRNA, thus increasing their reactivity as acceptors for peptidyl transferase. The protein is Elongation factor P (efp) of Rickettsia conorii (strain ATCC VR-613 / Malish 7).